Here is a 505-residue protein sequence, read N- to C-terminus: MLLPRWFAEALLLLLSILACSNAAFIGVNIGTDLTNMPPPSDIVTLLKSQQITHVRLYDANSHMLKAFANTSIEVMVGVTNEEILKIGRFPSAAAAWVNKNVAAYIPSTNITAIAVGSEVLTTIPHVAPILASALNNIHKALVASNLNFKVKVSSPMSMDIMPKPFPPSTSTFSPSWNTTVYQLLQFLKNTGSFFMLNAYPYYGYTTANGIFPLDYALFKQLSPVKQIVDPNTLLHYNSMFDAMVDAAYYSMEALNFSKIPVVVTETGWPSSGGSDEAAATVANAETFNTNLIKRVLNNSGPPSQPDIPINTYIYELYNEDKRSGPVSERNWGILFPNGTSVYPLSLSGGSSSAALNGSSMFCVAKADADDDKLVDGLNWACGQGRANCAAIQPGQPCYLPNDVKSHASFAFNDYYQKMKSAGGTCDFDGTAITTTRDPSYRTCAYTGSLNANATNGNFPPDALGPASPLGGNANARIIFSYHLPILAPLALTLLQLLLQHDRLL.

Positions 1-23 (MLLPRWFAEALLLLLSILACSNA) are cleaved as a signal peptide. N-linked (GlcNAc...) asparagine glycans are attached at residues N70 and N110. Residue E119 is the Proton donor of the active site. N178 and N256 each carry an N-linked (GlcNAc...) asparagine glycan. The active-site Nucleophile is the E266. 3 N-linked (GlcNAc...) asparagine glycosylation sites follow: N298, N338, and N357. An intrachain disulfide couples C363 to C426. The N-linked (GlcNAc...) asparagine glycan is linked to N453. The GPI-anchor amidated alanine moiety is linked to residue A474. Positions 475–505 (NARIIFSYHLPILAPLALTLLQLLLQHDRLL) are cleaved as a propeptide — removed in mature form.

It belongs to the glycosyl hydrolase 17 family. Post-translationally, contains two additional disulfide bonds.

The protein localises to the cell membrane. It carries out the reaction Hydrolysis of (1-&gt;3)-beta-D-glucosidic linkages in (1-&gt;3)-beta-D-glucans.. This chain is Glucan endo-1,3-beta-glucosidase 4, found in Arabidopsis thaliana (Mouse-ear cress).